The following is a 376-amino-acid chain: Chaperone protein DnaJ (376 aa).

A J domain is found at 5-70 (DYYEILGVSK…QKRAAYDQYG (66 aa)). The segment at 131-209 (GVTKEIRIPT…CHGHGRVERS (79 aa)) adopts a CR-type zinc-finger fold. 8 residues coordinate Zn(2+): Cys-144, Cys-147, Cys-161, Cys-164, Cys-183, Cys-186, Cys-197, and Cys-200. CXXCXGXG motif repeat units follow at residues 144 to 151 (CDVCHGSG), 161 to 168 (CPTCHGSG), 183 to 190 (CPHCQGRG), and 197 to 204 (CNKCHGHG).

The protein belongs to the DnaJ family. In terms of assembly, homodimer. Zn(2+) serves as cofactor.

The protein localises to the cytoplasm. In terms of biological role, participates actively in the response to hyperosmotic and heat shock by preventing the aggregation of stress-denatured proteins and by disaggregating proteins, also in an autonomous, DnaK-independent fashion. Unfolded proteins bind initially to DnaJ; upon interaction with the DnaJ-bound protein, DnaK hydrolyzes its bound ATP, resulting in the formation of a stable complex. GrpE releases ADP from DnaK; ATP binding to DnaK triggers the release of the substrate protein, thus completing the reaction cycle. Several rounds of ATP-dependent interactions between DnaJ, DnaK and GrpE are required for fully efficient folding. Also involved, together with DnaK and GrpE, in the DNA replication of plasmids through activation of initiation proteins. The sequence is that of Chaperone protein DnaJ from Shigella dysenteriae serotype 1 (strain Sd197).